Here is a 479-residue protein sequence, read N- to C-terminus: Arf-GAP domain and FG repeat-containing protein 2 (479 aa).

One can recognise an Arf-GAP domain in the interval 27–153 (EVWCRRVREL…WYVPPEQVKG (127 aa)). Residues 47-70 (CFECAQRGVTYVDITVGSFVCTTC) form a C4-type zinc finger. Disordered regions lie at residues 150–223 (QVKG…TKKA) and 450–479 (LSQP…NPFL). The segment covering 157–167 (SKGSVSATPVQ) has biased composition (polar residues). Position 174 is an N6-acetyllysine (Lys174). Positions 194 to 218 (SSQPGSQSQARSSSQARSSQPPSHS) are enriched in low complexity. Residues 454–479 (AGISTNPFMTGSSAFASKPPTTNPFL) are compositionally biased toward polar residues.

Interacts with EPS15R.

The sequence is that of Arf-GAP domain and FG repeat-containing protein 2 (Agfg2) from Mus musculus (Mouse).